The chain runs to 512 residues: DNA-binding protein (512 aa).

Residues 1 to 105 form a disordered region; sequence MAGRGGSQLE…QDSEDEREAE (105 aa). Residues 9–21 show a composition bias toward basic and acidic residues; the sequence is LERRRERTPDRGR. The span at 69–78 shows a compositional bias: pro residues; it reads QEQPPPPQQP. The span at 79–88 shows a compositional bias: basic residues; sequence PKKKPRKTKH. A compositionally biased stretch (acidic residues) spans 96 to 105; it reads QDSEDEREAE. Residue Y174 is modified to Phosphotyrosine; by host. Residues C263 and H265 each contribute to the Zn(2+) site. The flexible loop stretch occupies residues 276 to 310; it reads IEMDVASENGQRALKENPDRAKVTQNRWGRSVVQL. C318, C334, C376, C378, C430, and C447 together coordinate Zn(2+). The tract at residues 495 to 512 is C-terminal arm, DBP binding; the sequence is VSLPAGHAETSRQNPFDF.

Belongs to the adenoviridae E2A DNA-binding protein family. In terms of assembly, homomultimerizes on viral ssDNA bound to pTP. Forms a initiation complex with viral polymerase, pTP and hosts NFIA and POU2F1/OCT1. Interacts with host SRCAP.

Its subcellular location is the host nucleus. In terms of biological role, plays a role in the elongation phase of viral strand displacement replication by unwinding the template in an ATP-independent fashion, employing its capacity to form multimers. Also enhances the rate of initiation. Released from template upon second strand synthesis. Assembles in complex with viral pTP, viral pol, host NFIA and host POU2F1/OCT1 on viral origin of replication. Covers the whole ssDNA genome during synthesis. The complementary strand synthesis induces its relese from DNA template. May inhibit cellular transcription mediated by the interaction between host SRCAP and CBP. The protein is DNA-binding protein of Homo sapiens (Human).